Here is a 152-residue protein sequence, read N- to C-terminus: MDKEETIVTIVGSVLAHEGAEFVYAGKAAECESCKVAKVCHNAKLREGKRYRVVSVRKTKHDCAVHEGGAKAVEVAETIITAVIPTSQATRRTRITYTPVCDDVFCKGYAFCHPDGLTEKGRYVVLEVLGPYSECPKGTKNLKLVEMRPVPT.

This sequence belongs to the UPF0179 family.

This Methanocorpusculum labreanum (strain ATCC 43576 / DSM 4855 / Z) protein is UPF0179 protein Mlab_1307.